Here is a 278-residue protein sequence, read N- to C-terminus: 2-dehydro-3-deoxyphosphooctonate aldolase (278 aa).

Belongs to the KdsA family.

The protein resides in the cytoplasm. The enzyme catalyses D-arabinose 5-phosphate + phosphoenolpyruvate + H2O = 3-deoxy-alpha-D-manno-2-octulosonate-8-phosphate + phosphate. It participates in carbohydrate biosynthesis; 3-deoxy-D-manno-octulosonate biosynthesis; 3-deoxy-D-manno-octulosonate from D-ribulose 5-phosphate: step 2/3. It functions in the pathway bacterial outer membrane biogenesis; lipopolysaccharide biosynthesis. The sequence is that of 2-dehydro-3-deoxyphosphooctonate aldolase from Dechloromonas aromatica (strain RCB).